Reading from the N-terminus, the 253-residue chain is Malonyl-[acyl-carrier protein] O-methyltransferase (253 aa).

This sequence belongs to the methyltransferase superfamily.

The catalysed reaction is malonyl-[ACP] + S-adenosyl-L-methionine = malonyl-[ACP] methyl ester + S-adenosyl-L-homocysteine. The protein operates within cofactor biosynthesis; biotin biosynthesis. Converts the free carboxyl group of a malonyl-thioester to its methyl ester by transfer of a methyl group from S-adenosyl-L-methionine (SAM). It allows to synthesize pimeloyl-ACP via the fatty acid synthetic pathway. The sequence is that of Malonyl-[acyl-carrier protein] O-methyltransferase from Pectobacterium atrosepticum (strain SCRI 1043 / ATCC BAA-672) (Erwinia carotovora subsp. atroseptica).